A 142-amino-acid polypeptide reads, in one-letter code: MFIGEYNHGVDSKNRIIIPSKFREELGESFILTKGLDNCLYIYPMEEWRILEEKLKKLPLTNKDARAFVRFFFSGANEISIDKQGRALIPQNLMKYANINKDIVSIGVATRIEIWSREKWEEYNDANIDYEQIAEKMSELGI.

2 SpoVT-AbrB domains span residues 5-47 (EYNH…PMEE) and 76-119 (ANEI…SREK).

This sequence belongs to the MraZ family. As to quaternary structure, forms oligomers.

The protein resides in the cytoplasm. It is found in the nucleoid. The protein is Transcriptional regulator MraZ of Clostridium tetani (strain Massachusetts / E88).